Reading from the N-terminus, the 30-residue chain is rRNA N-glycosylase (30 aa).

Belongs to the ribosome-inactivating protein family. Type 1 RIP subfamily. As to expression, expressed in seeds.

It carries out the reaction Endohydrolysis of the N-glycosidic bond at one specific adenosine on the 28S rRNA.. Functionally, exhibits N-glycosylase activity. Catalyzes the release of one adenine from a ribosome. Acts as a ribosome-inactivating protein and inhibits protein synthesis in a rabbit-reticulocyte lysate system and in various cell lines (in vitro). This is rRNA N-glycosylase from Saponaria ocymoides (Rock soapwort).